Reading from the N-terminus, the 99-residue chain is Co-chaperonin GroES (99 aa).

Belongs to the GroES chaperonin family. Heptamer of 7 subunits arranged in a ring. Interacts with the chaperonin GroEL.

It is found in the cytoplasm. Its function is as follows. Together with the chaperonin GroEL, plays an essential role in assisting protein folding. The GroEL-GroES system forms a nano-cage that allows encapsulation of the non-native substrate proteins and provides a physical environment optimized to promote and accelerate protein folding. GroES binds to the apical surface of the GroEL ring, thereby capping the opening of the GroEL channel. This Rhodococcus erythropolis (strain PR4 / NBRC 100887) protein is Co-chaperonin GroES.